The sequence spans 379 residues: UDP-N-acetylglucosamine--N-acetylmuramyl-(pentapeptide) pyrophosphoryl-undecaprenol N-acetylglucosamine transferase (379 aa).

UDP-N-acetyl-alpha-D-glucosamine is bound by residues 17 to 19 (TGG), Asn128, Arg169, Ser197, and Gln298.

The protein belongs to the glycosyltransferase 28 family. MurG subfamily.

It is found in the cell inner membrane. It carries out the reaction di-trans,octa-cis-undecaprenyl diphospho-N-acetyl-alpha-D-muramoyl-L-alanyl-D-glutamyl-meso-2,6-diaminopimeloyl-D-alanyl-D-alanine + UDP-N-acetyl-alpha-D-glucosamine = di-trans,octa-cis-undecaprenyl diphospho-[N-acetyl-alpha-D-glucosaminyl-(1-&gt;4)]-N-acetyl-alpha-D-muramoyl-L-alanyl-D-glutamyl-meso-2,6-diaminopimeloyl-D-alanyl-D-alanine + UDP + H(+). Its pathway is cell wall biogenesis; peptidoglycan biosynthesis. Functionally, cell wall formation. Catalyzes the transfer of a GlcNAc subunit on undecaprenyl-pyrophosphoryl-MurNAc-pentapeptide (lipid intermediate I) to form undecaprenyl-pyrophosphoryl-MurNAc-(pentapeptide)GlcNAc (lipid intermediate II). The sequence is that of UDP-N-acetylglucosamine--N-acetylmuramyl-(pentapeptide) pyrophosphoryl-undecaprenol N-acetylglucosamine transferase from Brucella suis biovar 1 (strain 1330).